A 389-amino-acid polypeptide reads, in one-letter code: uncharacterized protein (389 aa).

This is an uncharacterized protein from Treponema pallidum (strain Nichols).